A 234-amino-acid polypeptide reads, in one-letter code: Opacity protein opA55 (234 aa).

Ala1 is a signal peptide.

The protein belongs to the opacity porin family.

It is found in the cell outer membrane. Functionally, implicated in a number of adherence functions. OPA proteins are implicated in pathogenesis and are subject to phase variation. This chain is Opacity protein opA55 (opaE), found in Neisseria gonorrhoeae.